The following is a 357-amino-acid chain: Peptide chain release factor 1 (357 aa).

Gln-234 is subject to N5-methylglutamine. Positions 283 to 313 (SKKQEQRSSNRKQQVGSGDRSERIRTYNFPQ) are disordered.

Belongs to the prokaryotic/mitochondrial release factor family. Methylated by PrmC. Methylation increases the termination efficiency of RF1.

The protein localises to the cytoplasm. Peptide chain release factor 1 directs the termination of translation in response to the peptide chain termination codons UAG and UAA. In Borreliella burgdorferi (strain ATCC 35210 / DSM 4680 / CIP 102532 / B31) (Borrelia burgdorferi), this protein is Peptide chain release factor 1 (prfA).